A 72-amino-acid polypeptide reads, in one-letter code: Protein SlyX (72 aa).

The tract at residues K53–Y72 is disordered.

The protein belongs to the SlyX family.

This is Protein SlyX from Proteus mirabilis (strain HI4320).